Consider the following 471-residue polypeptide: Lincomycin resistance protein LmrB (471 aa).

13 helical membrane passes run 15–34 (PIIA…ETAL), 55–77 (LTTG…LQWF), 82–104 (LFFT…PTFA), 111–131 (VVQA…ILLI), 141–163 (MGMI…GLIL), 170–187 (WIFW…LFGM), 202–224 (DILS…SSAG), 231–253 (ATVL…RQLT), 268–290 (MFTL…MILL), 297–319 (SLAL…NGLM), 329–351 (AYGP…FFLT), 358–380 (SALT…MMPA), and 445–467 (GIQN…SLFI).

This sequence belongs to the major facilitator superfamily. EmrB family.

The protein localises to the cell membrane. Its function is as follows. Proton-dependent transporter. May mediate the efflux of lincomycin. The chain is Lincomycin resistance protein LmrB (lmrB) from Listeria innocua serovar 6a (strain ATCC BAA-680 / CLIP 11262).